Reading from the N-terminus, the 172-residue chain is Small ribosomal subunit protein uS5 (172 aa).

Residues 17-80 enclose the S5 DRBM domain; the sequence is LREKMIAVNR…DEARRKMIKV (64 aa).

This sequence belongs to the universal ribosomal protein uS5 family. As to quaternary structure, part of the 30S ribosomal subunit. Contacts proteins S4 and S8.

In terms of biological role, with S4 and S12 plays an important role in translational accuracy. Its function is as follows. Located at the back of the 30S subunit body where it stabilizes the conformation of the head with respect to the body. The protein is Small ribosomal subunit protein uS5 of Polynucleobacter asymbioticus (strain DSM 18221 / CIP 109841 / QLW-P1DMWA-1) (Polynucleobacter necessarius subsp. asymbioticus).